Consider the following 1169-residue polypeptide: Protein qua-1 (1169 aa).

A signal peptide spans 1-22 (MRRLSAILPILLLSNFWPTVES). 2 disordered regions span residues 261–338 (GATG…AGTN) and 368–933 (AGGV…RTSS). The segment covering 278 to 292 (ESNGNNNNSFEGGRS) has biased composition (low complexity). Positions 312-337 (GAGGKGGAGADGAAGSGAGAGAGAGT) are enriched in gly residues. Composition is skewed to acidic residues over residues 426 to 437 (DEEDEEDNGDED) and 453 to 464 (DDGDGDEDDDGT). Residues 511–523 (SPDDNDLLEKDEN) are compositionally biased toward basic and acidic residues. Gly residues-rich tracts occupy residues 526 to 536 (NGKGGAGNGNG), 545 to 572 (KGNGTGDGDGDGNGNGNGLTGDGNGTGD), 605 to 634 (DGNGNGTGDGNGDGNDNGNGSKGLGTGSGD), 656 to 700 (GSNG…GGTG), and 727 to 752 (NAEGNGKGNGNDGKGSGSGDGSGAGG). Over residues 753 to 774 (KGDKSDSESGNEADGKDGKKNE) the composition is skewed to basic and acidic residues. The span at 775–791 (GAGGEAAAGSGGANKGG) shows a compositional bias: gly residues. Residues 793–803 (DGDDDDVDVTD) show a composition bias toward acidic residues. The span at 840 to 855 (GTVQTGAKHNAESSAS) shows a compositional bias: polar residues. The span at 889–906 (SGTSESVTNGSGATESGS) shows a compositional bias: low complexity. Positions 907–923 (TGSGTTGTGTSGTGSSG) are enriched in gly residues. Residues 924–933 (TGASAARTSS) are compositionally biased toward low complexity.

In terms of tissue distribution, transiently expressed in head cells.

It localises to the cytoplasmic vesicle. Its subcellular location is the secreted. It is found in the extracellular space. The protein resides in the extracellular matrix. Its function is as follows. Required for cuticle shedding and normal alae morphology and localization, and subsequently larval development. This Caenorhabditis elegans protein is Protein qua-1.